A 239-amino-acid chain; its full sequence is Cysteine-rich venom protein (239 aa).

An N-terminal signal peptide occupies residues 1-18; it reads MIVFILLSLAAVLQQSVA. In terms of domain architecture, SCP spans 37 to 165; that stretch reads VDMHNSFRRS…PYNYFYVCQY (129 aa). 7 disulfides stabilise this stretch: cysteine 74–cysteine 152, cysteine 91–cysteine 166, cysteine 147–cysteine 163, cysteine 185–cysteine 192, cysteine 188–cysteine 197, cysteine 210–cysteine 228, and cysteine 219–cysteine 232. In terms of domain architecture, ShKT spans 201–234; that stretch reads CPINNVFTNCDSLLQQSSCEDSYITTNCGASCFC.

It belongs to the CRISP family. As to expression, expressed by the venom gland.

It is found in the secreted. In terms of biological role, blocks contraction of smooth muscle elicited by high potassium-induced depolarization, but does not block caffeine-stimulated contraction. May target voltage-gated calcium channels on smooth muscle. In Cerberus rynchops (Dog-faced water snake), this protein is Cysteine-rich venom protein.